The chain runs to 151 residues: Arginine repressor (151 aa).

The protein belongs to the ArgR family.

The protein localises to the cytoplasm. Its pathway is amino-acid biosynthesis; L-arginine biosynthesis [regulation]. Its function is as follows. Regulates arginine biosynthesis genes. The chain is Arginine repressor from Moorella thermoacetica (strain ATCC 39073 / JCM 9320).